A 292-amino-acid polypeptide reads, in one-letter code: MRAYPIKTRYIKRGENFIPIVVEAIKNSGIKLEDGDFVVLSEKMVSTAEGNFIDESKFKPGVLAYLCYYWSKYLWGYVLGKLLKVKEDKIKNLRRMPKEETLKHKQTIIEIVGLRYALKPYAEGGVDLTNVPGTYACPLPKNPKKWAEELYKEIKKELGVDVVVMVADTDATYRVLNFYFTALPYAIDGIISGIGVFGFILGRLADVLKIGGFAGCTPLAIAGNEVYKKYSIGELTRIAFICDRVHKTIKNINEVLEKYNTYVITEEILEKLEHTPVVVVKIKEEYKPESQR.

A helical transmembrane segment spans residues 175 to 197; the sequence is VLNFYFTALPYAIDGIISGIGVF.

It is found in the membrane. This is an uncharacterized protein from Methanocaldococcus jannaschii (strain ATCC 43067 / DSM 2661 / JAL-1 / JCM 10045 / NBRC 100440) (Methanococcus jannaschii).